We begin with the raw amino-acid sequence, 368 residues long: Agmatine deiminase (368 aa).

Catalysis depends on Cys357, which acts as the Amidino-cysteine intermediate.

Belongs to the agmatine deiminase family. As to quaternary structure, homodimer.

The enzyme catalyses agmatine + H2O = N-carbamoylputrescine + NH4(+). It participates in amine and polyamine biosynthesis; putrescine biosynthesis via agmatine pathway; N-carbamoylputrescine from agmatine: step 1/1. Functionally, mediates the hydrolysis of agmatine into N-carbamoylputrescine in the arginine decarboxylase (ADC) pathway of putrescine biosynthesis, a basic polyamine. In Pseudomonas putida (strain ATCC 700007 / DSM 6899 / JCM 31910 / BCRC 17059 / LMG 24140 / F1), this protein is Agmatine deiminase.